The chain runs to 1029 residues: Carbamoyl phosphate synthase large chain (1029 aa).

A carboxyphosphate synthetic domain region spans residues 1–402 (MPKRTDLQTI…SLQKALRSTE (402 aa)). The ATP site is built by Arg129, Arg169, Gly175, Gly176, Glu208, Ile210, Glu215, Gly241, Val242, His243, Gln285, and Glu299. One can recognise an ATP-grasp 1 domain in the interval 133–328 (QAAMKKIGVE…IAKIAALLAV (196 aa)). Positions 285, 299, and 301 each coordinate Mg(2+). Mn(2+)-binding residues include Gln285, Glu299, and Asn301. The interval 403–544 (SDIRGVYAEM…YHYSTYEWED (142 aa)) is oligomerization domain. Residues 545 to 929 (EVTGTDKPKV…AFYRAQLGAK (385 aa)) form a carbamoyl phosphate synthetic domain region. One can recognise an ATP-grasp 2 domain in the interval 671-863 (NALCERLGLS…LAKSAARIAV (193 aa)). ATP is bound by residues Arg707, Gln747, Leu749, Glu754, Gly779, Val780, His781, Ser782, Gln822, and Glu834. 3 residues coordinate Mg(2+): Gln822, Glu834, and Asn836. Residues Gln822, Glu834, and Asn836 each coordinate Mn(2+). The MGS-like domain occupies 930–1028 (SYLPLSGTAL…QDWQTQEAVA (99 aa)). The allosteric domain stretch occupies residues 930–1029 (SYLPLSGTAL…DWQTQEAVAG (100 aa)).

It belongs to the CarB family. In terms of assembly, composed of two chains; the small (or glutamine) chain promotes the hydrolysis of glutamine to ammonia, which is used by the large (or ammonia) chain to synthesize carbamoyl phosphate. Tetramer of heterodimers (alpha,beta)4. Mg(2+) serves as cofactor. It depends on Mn(2+) as a cofactor.

The enzyme catalyses hydrogencarbonate + L-glutamine + 2 ATP + H2O = carbamoyl phosphate + L-glutamate + 2 ADP + phosphate + 2 H(+). It carries out the reaction hydrogencarbonate + NH4(+) + 2 ATP = carbamoyl phosphate + 2 ADP + phosphate + 2 H(+). It participates in amino-acid biosynthesis; L-arginine biosynthesis; carbamoyl phosphate from bicarbonate: step 1/1. The protein operates within pyrimidine metabolism; UMP biosynthesis via de novo pathway; (S)-dihydroorotate from bicarbonate: step 1/3. In terms of biological role, large subunit of the glutamine-dependent carbamoyl phosphate synthetase (CPSase). CPSase catalyzes the formation of carbamoyl phosphate from the ammonia moiety of glutamine, carbonate, and phosphate donated by ATP, constituting the first step of 2 biosynthetic pathways, one leading to arginine and/or urea and the other to pyrimidine nucleotides. The large subunit (synthetase) binds the substrates ammonia (free or transferred from glutamine from the small subunit), hydrogencarbonate and ATP and carries out an ATP-coupled ligase reaction, activating hydrogencarbonate by forming carboxy phosphate which reacts with ammonia to form carbamoyl phosphate. The chain is Carbamoyl phosphate synthase large chain from Deinococcus deserti (strain DSM 17065 / CIP 109153 / LMG 22923 / VCD115).